The sequence spans 410 residues: 2-epi-5-epi-valiolone synthase (410 aa).

NAD(+) is bound by residues aspartate 66, 97–100 (ETLK), 130–134 (GVLMD), 154–155 (TT), lysine 167, lysine 176, and 194–197 (FLAT). Lysine 167 is a catalytic residue. Residues glutamate 209, histidine 280, and histidine 296 each coordinate a divalent metal cation.

The protein belongs to the sugar phosphate cyclases superfamily. EEVS family. NAD(+) is required as a cofactor. Co(2+) serves as cofactor.

The enzyme catalyses D-sedoheptulose 7-phosphate = 2-epi-5-epi-valiolone + phosphate. Catalyzes the cyclization of D-sedoheptulose 7-phosphate to 2-epi-5-epi-valiolone. Involved in salbostatin biosynthesis. This is 2-epi-5-epi-valiolone synthase from Streptomyces albus (strain ATCC 21838 / DSM 41398 / FERM P-419 / JCM 4703 / NBRC 107858).